The following is a 195-amino-acid chain: dITP/XTP pyrophosphatase (195 aa).

9 to 14 lines the substrate pocket; it reads TNNQGK. Mg(2+) contacts are provided by Glu39 and Asp68. Residue Asp68 is the Proton acceptor of the active site. Substrate is bound by residues Ser69, 146 to 149, Lys169, and 174 to 175; these read FGYD and HR.

It belongs to the HAM1 NTPase family. Homodimer. Mg(2+) serves as cofactor.

The enzyme catalyses XTP + H2O = XMP + diphosphate + H(+). It catalyses the reaction dITP + H2O = dIMP + diphosphate + H(+). The catalysed reaction is ITP + H2O = IMP + diphosphate + H(+). Its function is as follows. Pyrophosphatase that catalyzes the hydrolysis of nucleoside triphosphates to their monophosphate derivatives, with a high preference for the non-canonical purine nucleotides XTP (xanthosine triphosphate), dITP (deoxyinosine triphosphate) and ITP. Seems to function as a house-cleaning enzyme that removes non-canonical purine nucleotides from the nucleotide pool, thus preventing their incorporation into DNA/RNA and avoiding chromosomal lesions. The polypeptide is dITP/XTP pyrophosphatase (Gloeobacter violaceus (strain ATCC 29082 / PCC 7421)).